The primary structure comprises 249 residues: Probable calcium-binding protein CML12 (249 aa).

Positions 1–24 (MQSQRERPREDRVHEETRGADHAH) are enriched in basic and acidic residues. Residues 1–80 (MQSQRERPRE…RKGKAPATAE (80 aa)) are disordered. A compositionally biased stretch (low complexity) spans 30-56 (AAAAASATATETATRTMSLHAGGVVVV). The span at 57–70 (DGKEKGKKEEGEGK) shows a compositional bias: basic and acidic residues. EF-hand domains follow at residues 91–126 (EQLR…LGLR), 128–163 (AAGD…LILG), 171–206 (VDQA…MGHP), and 207–242 (ICYA…SALD). Residues aspartate 104, aspartate 106, aspartate 108, serine 110, glutamate 115, aspartate 141, aspartate 143, asparagine 145, threonine 147, glutamate 152, aspartate 184, aspartate 186, asparagine 188, glutamate 195, aspartate 220, aspartate 222, aspartate 224, and glutamate 231 each coordinate Ca(2+).

Its function is as follows. Potential calcium sensor. In Oryza sativa subsp. japonica (Rice), this protein is Probable calcium-binding protein CML12 (CML12).